A 60-amino-acid polypeptide reads, in one-letter code: Conotoxin Cal6.30 (60 aa).

The N-terminal stretch at 1 to 22 (MKVTCVLTLAVLILTIGQIANA) is a signal peptide. Cystine bridges form between Cys-31-Cys-47, Cys-38-Cys-51, and Cys-46-Cys-55.

As to expression, expressed by the venom duct.

The protein resides in the secreted. Probable neurotoxin. The polypeptide is Conotoxin Cal6.30 (Californiconus californicus (California cone)).